A 221-amino-acid chain; its full sequence is Peptide methionine sulfoxide reductase MsrA (221 aa).

Residue C54 is part of the active site.

This sequence belongs to the MsrA Met sulfoxide reductase family.

It carries out the reaction L-methionyl-[protein] + [thioredoxin]-disulfide + H2O = L-methionyl-(S)-S-oxide-[protein] + [thioredoxin]-dithiol. The enzyme catalyses [thioredoxin]-disulfide + L-methionine + H2O = L-methionine (S)-S-oxide + [thioredoxin]-dithiol. Its function is as follows. Has an important function as a repair enzyme for proteins that have been inactivated by oxidation. Catalyzes the reversible oxidation-reduction of methionine sulfoxide in proteins to methionine. This is Peptide methionine sulfoxide reductase MsrA from Methylobacterium sp. (strain 4-46).